Consider the following 800-residue polypeptide: MSRRRAHDTEDEGYDHRRNKRRRVSENQEIEDRLESLILRVGERSTSSVESNLEGLVSVLEADLGTFRLKILRILSDCAVRMPEKCTVYTTLVGLLNAKNYKFGGEFVDHMVKTFKESLKMCRWDAARYSLRFLADLVNCHVISATSLLQLLDTMIDVSNEDTVPQVRRDWFVFAVLSTLPWVGRDLYEKKESALESLLLRIEVYLNKRSKKHHNALRVWSSDAPHPQEEYLDCLWAQIRKLRQDNWAEKHIPRPYLTFDTILCEALQHNLPQIIPPPHNDAFVYPMPWVVYRMFDYTDCPDGPNLPGAHSIERFLIEEHLHHIIETYHHERKDCAAQLLSFPFKHKIPLEYCIVEVIFAELFHMPTPRYLDICYGSILIELCKLQPATLPQVLAQATEILFMRIDSMNTSCFDRFVNWFSYHLSNFKFTWSWDEWDSCLLLDGEHPRPKFIQEVLQKCLRLSYHQRITEMMPTTYGKLIPQVPVPNFKYASEEAASLPGTAVAHQLVVAIRQKCSPEEVVNILKEIPNSGYSGEEMSDGTFNALKIDVFVQTLLNLGSKSFSHSFAAISKFHSVFRALAETEEAQICVLHNIYELWSSHQQMMVVLVDKLLKLQIVDCSAVATWIFSKEMTSEFTKMYLWEILHLTIKKMNKHVIKLNTELSVAKDKLSKADSSSSESDEDAPTKRKKPITHADKPSEEAVERMEEKLEAANVNQKRLFLIVFQRFIMILSEHMLRSDTDGRDPDTDWYRWTIGRLQQVFLMHHEQVQKYSSTLETLLFTSDLDTHILEVFQQFVALRA.

The disordered stretch occupies residues 1-26 (MSRRRAHDTEDEGYDHRRNKRRRVSE). At threonine 9 the chain carries Phosphothreonine. Residues 31–243 (EDRLESLILR…CLWAQIRKLR (213 aa)) form the MIF4G domain. Residues 669-704 (LSKADSSSSESDEDAPTKRKKPITHADKPSEEAVER) form a disordered region. Residues 692 to 704 (THADKPSEEAVER) show a composition bias toward basic and acidic residues.

The protein belongs to the NCBP1 family. In terms of assembly, component of the nuclear cap-binding complex (CBC), a heterodimer composed of Cbp80 and Cbp20 that interacts with m7GpppG-capped RNA.

The protein localises to the nucleus. Functionally, component of the cap-binding complex (CBC), which binds cotranscriptionally to the 5'-cap of pre-mRNAs and is involved in various processes such as pre-mRNA splicing and RNA-mediated gene silencing (RNAi). The CBC complex is involved in miRNA-mediated RNA interference via its interaction with Ars2 and is required for primary microRNAs (miRNAs) processing. Also involved in innate immunity via the short interfering RNAs (siRNAs) processing machinery by restricting the viral RNA production. In the CBC complex, Cbp80 does not bind directly capped RNAs (m7GpppG-capped RNA) but is required to stabilize the movement of the N-terminal loop of Cbp20 and lock the CBC into a high affinity cap-binding state with the cap structure. This Drosophila persimilis (Fruit fly) protein is Nuclear cap-binding protein subunit 1 (Cbp80).